The sequence spans 600 residues: UvrABC system protein C (600 aa).

The GIY-YIG domain maps to 16 to 94 (EKPGCYQYFD…IKEYQPRYNV (79 aa)). The region spanning 208–243 (HRLVRMYRDRMQAYSEELRFEEAQICKERIELLERY) is the UVR domain.

This sequence belongs to the UvrC family. In terms of assembly, interacts with UvrB in an incision complex.

Its subcellular location is the cytoplasm. Its function is as follows. The UvrABC repair system catalyzes the recognition and processing of DNA lesions. UvrC both incises the 5' and 3' sides of the lesion. The N-terminal half is responsible for the 3' incision and the C-terminal half is responsible for the 5' incision. The sequence is that of UvrABC system protein C from Porphyromonas gingivalis (strain ATCC 33277 / DSM 20709 / CIP 103683 / JCM 12257 / NCTC 11834 / 2561).